Reading from the N-terminus, the 440-residue chain is Xaa-Pro dipeptidase (440 aa).

Mn(2+)-binding residues include Asp-244, Asp-255, His-335, Glu-380, and Glu-419.

The protein belongs to the peptidase M24B family. Bacterial-type prolidase subfamily. Mn(2+) is required as a cofactor.

It carries out the reaction Xaa-L-Pro dipeptide + H2O = an L-alpha-amino acid + L-proline. Splits dipeptides with a prolyl residue in the C-terminal position. The sequence is that of Xaa-Pro dipeptidase from Shewanella baltica (strain OS223).